The chain runs to 300 residues: F-box/LRR-repeat protein 15 (300 aa).

N-acetylmethionine is present on Met1. Positions 19 to 66 (FLDLPWEDVLLPHVLNRVPLRQLLRLQRVSRAFRSLVQLHLAGLRRFD) constitute an F-box domain. Residues 113–269 (NPQLRSVALG…ESSLSRLRKR (157 aa)) are interaction with SMURF1. LRR repeat units follow at residues 141 to 162 (RLQR…RGLA), 167 to 188 (ALEE…VYLA), 194 to 215 (GLRS…QELA), 220 to 241 (ELHH…RTLA), and 246 to 267 (VLRS…SRLR).

The protein belongs to the FBXL15 family. In terms of assembly, part of the SCF (SKP1-CUL1-F-box) E3 ubiquitin-protein ligase complex SCF(FBXL15) composed of CUL1, SKP1, RBX1 and FBXL15.

It is found in the cytoplasm. The protein operates within protein modification; protein ubiquitination. In terms of biological role, substrate recognition component of a SCF (SKP1-CUL1-F-box protein) E3 ubiquitin-protein ligase complex which mediates the ubiquitination and subsequent proteasomal degradation of SMURF1, thereby acting as a positive regulator of the BMP signaling pathway. Required for dorsal/ventral pattern formation and bone mass maintenance. Also mediates ubiquitination of SMURF2 and WWP2. The chain is F-box/LRR-repeat protein 15 (FBXL15) from Homo sapiens (Human).